A 274-amino-acid chain; its full sequence is MTSAPPRWTTAELAEDAATSAAQFRTERLAVTDSWGTHYNQARGKFELLFKKLSDLNPEAITDDNLAEAYGLGLGEALRYLAGPPISDDDLQVIADVESIAPGVLKKNAEALRKVFGVIERVIDPHRFPWMETGGMPTEQQREAALLASSVLLAAQRIATERRNEGKDNQETMVKDYLRTLGFTEAPAAAINTIVKGPQAMQFCAECQLGERKADVVVRLHDTRLMAIECKVSNSSTNSVKRLNNDAAVKAEYWIKQFGTAQVVPSRSLVSSRY.

The enzyme catalyses Endonucleolytic cleavage of DNA to give specific double-stranded fragments with terminal 5'-phosphates.. In terms of biological role, a P subtype restriction enzyme that recognizes the double-stranded sequence 5'-GTCGAC-3' and cleaves after G-1. The sequence is that of Type II restriction enzyme XamI (xamIR) from Xanthomonas campestris pv. amaranthicola.